The following is a 367-amino-acid chain: Glutamate 5-kinase (367 aa).

Residue K10 coordinates ATP. Residues S50, D137, and N149 each coordinate substrate. Residues 169 to 170 and 211 to 217 each bind ATP; these read TD and TGGMGTK. A PUA domain is found at 275-353; that stretch reads AGEITVDEGA…QQIDAILGYE (79 aa).

It belongs to the glutamate 5-kinase family.

It localises to the cytoplasm. The catalysed reaction is L-glutamate + ATP = L-glutamyl 5-phosphate + ADP. It participates in amino-acid biosynthesis; L-proline biosynthesis; L-glutamate 5-semialdehyde from L-glutamate: step 1/2. In terms of biological role, catalyzes the transfer of a phosphate group to glutamate to form L-glutamate 5-phosphate. In Enterobacter sp. (strain 638), this protein is Glutamate 5-kinase.